We begin with the raw amino-acid sequence, 883 residues long: Valine--tRNA ligase (883 aa).

The 'HIGH' region motif lies at 51–61 (PNVTGKLHLGH). The short motif at 527–531 (KMSKS) is the 'KMSKS' region element. An ATP-binding site is contributed by Lys530. Residues 811 to 847 (LEALIDLNVEIARLEKELEKWNKEVARVQGKLNNERF) are a coiled coil.

The protein belongs to the class-I aminoacyl-tRNA synthetase family. ValS type 1 subfamily. Monomer.

The protein localises to the cytoplasm. The catalysed reaction is tRNA(Val) + L-valine + ATP = L-valyl-tRNA(Val) + AMP + diphosphate. In terms of biological role, catalyzes the attachment of valine to tRNA(Val). As ValRS can inadvertently accommodate and process structurally similar amino acids such as threonine, to avoid such errors, it has a 'posttransfer' editing activity that hydrolyzes mischarged Thr-tRNA(Val) in a tRNA-dependent manner. The protein is Valine--tRNA ligase of Listeria monocytogenes serovar 1/2a (strain ATCC BAA-679 / EGD-e).